The primary structure comprises 214 residues: MFKKFLIFIVPILFLSACATKQDTFAQVNQISKNSQCSSCESPGGFEAKIKGLLYISDVGIQCCANKRTLDTGIALKKVYLHRFYDLKEGQKVLNAKGKKLFVDVNFNAVFYTYLKQELEARGIVVLDNNDQNSPYVSKIDLEFISYGATQDAIGLHSKLVGVLQVSDINKNKKFTIRTKQDVQGFDDLKETTFYTHLLIKQMANKAASLISEL.

A signal peptide spans 1-17 (MFKKFLIFIVPILFLSA). Residue cysteine 18 is the site of N-palmitoyl cysteine attachment. Residue cysteine 18 is the site of S-diacylglycerol cysteine attachment.

The protein resides in the cell outer membrane. This Campylobacter jejuni subsp. jejuni serotype O:6 (strain 81116 / NCTC 11828) protein is Outer membrane lipoprotein MapA (mapA).